Here is a 285-residue protein sequence, read N- to C-terminus: 3-methyl-2-oxobutanoate hydroxymethyltransferase (285 aa).

Positions 1 to 23 (MSEHNVYGAAQPAQPAQPAQPRT) are disordered. The segment covering 9 to 21 (AAQPAQPAQPAQP) has biased composition (low complexity). Aspartate 66 and aspartate 105 together coordinate Mg(2+). 3-methyl-2-oxobutanoate is bound by residues 66–67 (DS), aspartate 105, and lysine 135. Residue glutamate 137 coordinates Mg(2+). The Proton acceptor role is filled by glutamate 203.

This sequence belongs to the PanB family. As to quaternary structure, homodecamer; pentamer of dimers. The cofactor is Mg(2+).

It is found in the cytoplasm. The enzyme catalyses 3-methyl-2-oxobutanoate + (6R)-5,10-methylene-5,6,7,8-tetrahydrofolate + H2O = 2-dehydropantoate + (6S)-5,6,7,8-tetrahydrofolate. It participates in cofactor biosynthesis; (R)-pantothenate biosynthesis; (R)-pantoate from 3-methyl-2-oxobutanoate: step 1/2. Functionally, catalyzes the reversible reaction in which hydroxymethyl group from 5,10-methylenetetrahydrofolate is transferred onto alpha-ketoisovalerate to form ketopantoate. In Mycobacterium avium (strain 104), this protein is 3-methyl-2-oxobutanoate hydroxymethyltransferase.